The primary structure comprises 667 residues: Leucine zipper putative tumor suppressor 2 (667 aa).

A compositionally biased stretch (low complexity) spans 1-25 (MAIVQTLPVPLEPAPEAATAQQAPA). Disordered regions lie at residues 1-132 (MAIV…PVSG), 150-325 (PVLP…DEAL), and 516-541 (QEAERLREKAGQLDSEAAGLREPPVP). A required for centrosomal localization region spans residues 1 to 333 (MAIVQTLPVP…ALLHCVLEGK (333 aa)). Residues 172-181 (PSGSQGSLTQ) are compositionally biased toward polar residues. The segment covering 187-198 (ASSSSSSSSSAA) has biased composition (low complexity). Residues 212–232 (PSGTLSDSGRNSLSSLPTYST) are compositionally biased toward polar residues. Positions 241-282 (SPGGHLPSHGPGRGALPGPARGAPTGPSHSDSGRSSSSKSTG) are enriched in low complexity. Serine 248 carries the phosphoserine modification. Gly residues predominate over residues 283 to 294 (SLGGRLAGGLLG). Serine 295 bears the Phosphoserine mark. The segment covering 310-321 (SPPPPPPPPPPS) has biased composition (pro residues). Residues 329–647 (VLEGKLRDRE…LELEARELAD (319 aa)) are a coiled coil. The segment at 445–667 (SGEISLLKQQ…CLEEITATEI (223 aa)) is sufficient for interaction with CTNNB1. Residues 448 to 667 (ISLLKQQLKE…CLEEITATEI (220 aa)) are sufficient for interaction with KATNB1 and for inhibition of katanin-mediated microtubule severing. Residues 516–526 (QEAERLREKAG) are compositionally biased toward basic and acidic residues. Serine 568 carries the post-translational modification Phosphoserine. Residues 629 to 638 (LEQELQQLSL) carry the Nuclear export signal motif.

The protein belongs to the LZTS2 family. As to quaternary structure, interacts with KATNB1. Also interacts with CTNNB1, gamma-tubulin and KIF23.

The protein resides in the cytoplasm. It localises to the cytoskeleton. Its subcellular location is the microtubule organizing center. The protein localises to the centrosome. Functionally, negative regulator of katanin-mediated microtubule severing and release from the centrosome. Required for central spindle formation and the completion of cytokinesis. May negatively regulate axonal outgrowth by preventing the formation of microtubule bundles that are necessary for transport within the elongating axon. Negative regulator of the Wnt signaling pathway. Represses beta-catenin-mediated transcriptional activation by promoting the nuclear exclusion of beta-catenin. The protein is Leucine zipper putative tumor suppressor 2 of Bos taurus (Bovine).